A 126-amino-acid polypeptide reads, in one-letter code: Aspartate 1-decarboxylase (126 aa).

Ser25 serves as the catalytic Schiff-base intermediate with substrate; via pyruvic acid. Position 25 is a pyruvic acid (Ser) (Ser25). A substrate-binding site is contributed by Thr57. Tyr58 functions as the Proton donor in the catalytic mechanism. 73–75 (GAA) contributes to the substrate binding site.

Belongs to the PanD family. As to quaternary structure, heterooctamer of four alpha and four beta subunits. The cofactor is pyruvate. Post-translationally, is synthesized initially as an inactive proenzyme, which is activated by self-cleavage at a specific serine bond to produce a beta-subunit with a hydroxyl group at its C-terminus and an alpha-subunit with a pyruvoyl group at its N-terminus.

Its subcellular location is the cytoplasm. It catalyses the reaction L-aspartate + H(+) = beta-alanine + CO2. Its pathway is cofactor biosynthesis; (R)-pantothenate biosynthesis; beta-alanine from L-aspartate: step 1/1. Functionally, catalyzes the pyruvoyl-dependent decarboxylation of aspartate to produce beta-alanine. The chain is Aspartate 1-decarboxylase from Proteus mirabilis (strain HI4320).